The chain runs to 385 residues: Protein-glutamate methylesterase/protein-glutamine glutaminase (385 aa).

4-aspartylphosphate is present on aspartate 53. The 190-residue stretch at 196–385 (KHKTGKIIVV…EIADHVLRRS (190 aa)) folds into the CheB-type methylesterase domain. Residues serine 208, histidine 234, and aspartate 330 contribute to the active site.

This sequence belongs to the CheB family. In terms of processing, phosphorylated by CheA. Phosphorylation of the N-terminal regulatory domain activates the methylesterase activity.

It is found in the cytoplasm. It catalyses the reaction [protein]-L-glutamate 5-O-methyl ester + H2O = L-glutamyl-[protein] + methanol + H(+). The enzyme catalyses L-glutaminyl-[protein] + H2O = L-glutamyl-[protein] + NH4(+). Functionally, involved in chemotaxis. Part of a chemotaxis signal transduction system that modulates chemotaxis in response to various stimuli. Catalyzes the demethylation of specific methylglutamate residues introduced into the chemoreceptors (methyl-accepting chemotaxis proteins or MCP) by CheR. Also mediates the irreversible deamidation of specific glutamine residues to glutamic acid. The sequence is that of Protein-glutamate methylesterase/protein-glutamine glutaminase from Borreliella burgdorferi (strain ATCC 35210 / DSM 4680 / CIP 102532 / B31) (Borrelia burgdorferi).